Here is an 82-residue protein sequence, read N- to C-terminus: Pigment-dispersing hormone peptides (82 aa).

A signal peptide spans 1 to 26 (MIGKYLSWFMLAFLFGFVLESYRVQS). At A80 the chain carries Alanine amide.

The protein belongs to the arthropod PDH family. In terms of tissue distribution, expressed strongly in the head and weakly in the ventral nerve cord. Not detected in the midgut cecum or hindgut. In the cephalic neural complex, specifically localized to cells within the optic lobe, anteromedian protocerebrum, accessory lobe, tritocerebrum, and subesophageal ganglion.

It is found in the secreted. Its function is as follows. The pigment-dispersing hormone causes the migration of the distal retinal pigment into the proximal end of the pigment chromatophore cells and thus decreases the amount of light entering the retinulas. May also function as a neurotransmitter and/or neuromodulator. In Armadillidium vulgare (Pillbug), this protein is Pigment-dispersing hormone peptides.